The sequence spans 173 residues: 2-C-methyl-D-erythritol 2,4-cyclodiphosphate synthase (173 aa).

Asp-17 and His-19 together coordinate a divalent metal cation. Residues 17–19 and 49–50 contribute to the 4-CDP-2-C-methyl-D-erythritol 2-phosphate site; these read DVH and HS. An a divalent metal cation-binding site is contributed by His-57. 4-CDP-2-C-methyl-D-erythritol 2-phosphate is bound by residues 76–80, 147–150, and Arg-157; these read FPNTD and TTTE.

Belongs to the IspF family. Homotrimer. It depends on a divalent metal cation as a cofactor.

It carries out the reaction 4-CDP-2-C-methyl-D-erythritol 2-phosphate = 2-C-methyl-D-erythritol 2,4-cyclic diphosphate + CMP. The protein operates within isoprenoid biosynthesis; isopentenyl diphosphate biosynthesis via DXP pathway; isopentenyl diphosphate from 1-deoxy-D-xylulose 5-phosphate: step 4/6. Functionally, involved in the biosynthesis of isopentenyl diphosphate (IPP) and dimethylallyl diphosphate (DMAPP), two major building blocks of isoprenoid compounds. Catalyzes the conversion of 4-diphosphocytidyl-2-C-methyl-D-erythritol 2-phosphate (CDP-ME2P) to 2-C-methyl-D-erythritol 2,4-cyclodiphosphate (ME-CPP) with a corresponding release of cytidine 5-monophosphate (CMP). In Ehrlichia ruminantium (strain Gardel), this protein is 2-C-methyl-D-erythritol 2,4-cyclodiphosphate synthase.